Reading from the N-terminus, the 255-residue chain is Protein N-terminal and lysine N-methyltransferase efm7 (255 aa).

The tract at residues 1-25 (MADNDFEGFGIFEEPEGFRPSTPPP) is disordered. Residues Trp58, 84 to 86 (GAG), Asp106, Trp137, and Ser162 contribute to the S-adenosyl-L-methionine site.

The protein belongs to the class I-like SAM-binding methyltransferase superfamily. EFM7 family.

Its subcellular location is the cytoplasm. Its function is as follows. S-adenosyl-L-methionine-dependent protein methyltransferase that trimethylates the N-terminal glycine 'Gly-2' of elongation factor 1-alpha, before also catalyzing the mono- and dimethylation of 'Lys-3'. The sequence is that of Protein N-terminal and lysine N-methyltransferase efm7 from Schizosaccharomyces pombe (strain 972 / ATCC 24843) (Fission yeast).